The sequence spans 460 residues: Diguanylate cyclase DosC (460 aa).

Residue His98 coordinates heme. Residues 325 to 458 (TPLSVLIIDV…GRNRVELWKA (134 aa)) form the GGDEF domain. A Mg(2+)-binding site is contributed by Asp333. Residues Asn341 and Asp350 each coordinate substrate. Asp376 is a Mg(2+) binding site. Asp376 (proton acceptor) is an active-site residue.

The cofactor is heme. Mg(2+) serves as cofactor.

The enzyme catalyses 2 GTP = 3',3'-c-di-GMP + 2 diphosphate. The protein operates within purine metabolism; 3',5'-cyclic di-GMP biosynthesis. In terms of biological role, globin-coupled heme-based oxygen sensor protein displaying diguanylate cyclase (DGC) activity in response to oxygen availability. Thus, catalyzes the synthesis of cyclic diguanylate (c-di-GMP) via the condensation of 2 GTP molecules. Cyclic-di-GMP is a second messenger which controls cell surface-associated traits in bacteria. The polypeptide is Diguanylate cyclase DosC (dosC) (Shigella boydii serotype 4 (strain Sb227)).